The sequence spans 379 residues: uncharacterized protein (379 aa).

Disordered regions lie at residues 1–25 (MASD…EKGK), 128–158 (QGKT…IERT), and 355–379 (TEKT…QGDI). Over residues 128–141 (QGKTTSATTSNSTI) the composition is skewed to polar residues.

This is an uncharacterized protein from Caenorhabditis elegans.